Consider the following 357-residue polypeptide: Membrane-bound lytic murein transglycosylase C (357 aa).

Residues 1–15 form the signal peptide; that stretch reads MKKYLLLALLPFLYA. Residue Cys-16 is the site of N-palmitoyl cysteine attachment. A lipid anchor (S-diacylglycerol cysteine) is attached at Cys-16.

This sequence belongs to the transglycosylase Slt family.

The protein resides in the cell outer membrane. It catalyses the reaction Exolytic cleavage of the (1-&gt;4)-beta-glycosidic linkage between N-acetylmuramic acid (MurNAc) and N-acetylglucosamine (GlcNAc) residues in peptidoglycan, from either the reducing or the non-reducing ends of the peptidoglycan chains, with concomitant formation of a 1,6-anhydrobond in the MurNAc residue.. In terms of biological role, murein-degrading enzyme. May play a role in recycling of muropeptides during cell elongation and/or cell division. This is Membrane-bound lytic murein transglycosylase C from Haemophilus influenzae (strain ATCC 51907 / DSM 11121 / KW20 / Rd).